The following is a 348-amino-acid chain: DNA ligase C1 (348 aa).

The active-site N6-AMP-lysine intermediate is the Lys-32.

The protein belongs to the ATP-dependent DNA ligase family. The cofactor is a divalent metal cation.

It catalyses the reaction ATP + (deoxyribonucleotide)n-3'-hydroxyl + 5'-phospho-(deoxyribonucleotide)m = (deoxyribonucleotide)n+m + AMP + diphosphate.. In terms of biological role, DNA ligase that seals nicks in double-stranded DNA during DNA replication, DNA recombination and DNA repair. Has weak intrinsic nick joining activities and accumulates DNA-adenylate. Acts as a backup for LigD in the Ku-LigD-dependent NHEJ pathway. The polypeptide is DNA ligase C1 (ligC) (Mycolicibacterium smegmatis (strain ATCC 700084 / mc(2)155) (Mycobacterium smegmatis)).